The following is a 266-amino-acid chain: Bidirectional sugar transporter SWEET7b (266 aa).

The Extracellular portion of the chain corresponds to 1-9; that stretch reads MVSPDLIRN. A helical transmembrane segment spans residues 10–30; the sequence is MVGIVGNIISFGLFLSPVPTF. The 88-residue stretch at 10–97 folds into the MtN3/slv 1 domain; it reads MVGIVGNIIS…TIFFLFSDKK (88 aa). Topologically, residues 31–45 are cytoplasmic; that stretch reads YRIIKNKDVQDFKAD. Residues 46-66 form a helical membrane-spanning segment; sequence PYLATLLNCMLWVFYGLPIVH. Residues 67 to 69 lie on the Extracellular side of the membrane; the sequence is PNS. Residues 70-90 traverse the membrane as a helical segment; the sequence is ILVVTINGIGLIIEAVYLTIF. Residues 91–101 lie on the Cytoplasmic side of the membrane; the sequence is FLFSDKKNKKK. A helical transmembrane segment spans residues 102–122; sequence MGVVLATEALFMAAVVLGVLL. Topologically, residues 123–131 are extracellular; that stretch reads GAHTHQRRS. The chain crosses the membrane as a helical span at residues 132 to 152; it reads LIVGILCAIFGTIMYSSPLTI. Residues 133–216 enclose the MtN3/slv 2 domain; it reads IVGILCAIFG…LILYAIYYRT (84 aa). The Cytoplasmic portion of the chain corresponds to 153 to 165; sequence MSQVVKTKSVEYM. A helical transmembrane segment spans residues 166–186; it reads PLLLSVVSFLNGLCWTSYALI. Residues 187-189 lie on the Extracellular side of the membrane; the sequence is RLD. A helical transmembrane segment spans residues 190-210; the sequence is IFITIPNGLGVLFALMQLILY. The Cytoplasmic portion of the chain corresponds to 211–266; that stretch reads AIYYRTTPKKQDKNLELPTVAPVAKDTSIVTPVSKDDDVVDGGNASHVTINITIEP.

Belongs to the SWEET sugar transporter family. Forms homooligomers and/or heterooligomers.

It is found in the cell membrane. Functionally, mediates both low-affinity uptake and efflux of sugar across the plasma membrane. The sequence is that of Bidirectional sugar transporter SWEET7b (SWEET7B) from Oryza sativa subsp. indica (Rice).